Here is a 478-residue protein sequence, read N- to C-terminus: Glutamate-1-semialdehyde 2,1-aminomutase, chloroplastic (478 aa).

Residues Met1–Arg40 constitute a chloroplast transit peptide. Positions Ala15–Arg36 are disordered. Position 318 is an N6-(pyridoxal phosphate)lysine (Lys318).

The protein belongs to the class-III pyridoxal-phosphate-dependent aminotransferase family. HemL subfamily. As to quaternary structure, homodimer. Requires pyridoxal 5'-phosphate as cofactor.

The protein resides in the plastid. The protein localises to the chloroplast. It carries out the reaction (S)-4-amino-5-oxopentanoate = 5-aminolevulinate. The protein operates within porphyrin-containing compound metabolism; protoporphyrin-IX biosynthesis; 5-aminolevulinate from L-glutamyl-tRNA(Glu): step 2/2. It functions in the pathway porphyrin-containing compound metabolism; chlorophyll biosynthesis. The polypeptide is Glutamate-1-semialdehyde 2,1-aminomutase, chloroplastic (GSA) (Oryza sativa subsp. japonica (Rice)).